A 470-amino-acid chain; its full sequence is MGVPTSDWIYWCRLCARDDVVYKVRERDDDLVRIISKCFDVEMTLEEPELGSMLCEECYSVIGQLITFSDSVSKVQAIFELLRHSEPQDSQDLDALRLEYGLPPACKQDLEFLDIDDTEDRCSLVEELTISDHSTSPSPDFEAQTVRTRANLKQCNSDPKVLASPTASIPEVETKRSRRQQFAAKRNSKVYTATESDDEEAILDEDEAVSPPPLKRKRGRPKGSGKQKNVDDSDNVTSREPDDNAKSKQDDKTSELSMSPHGSQSSNFVDYPCKICNETFMSFMALRRHKHDMHGGPKKYVCDHCGKGLKTFTSLVEHQLVHTEEKPCICPVCNAGFKNKARLRVHSQTHGEPKFECNVCGKKLQTRAILNKHKYVHTDERRFKCEVCGSGCKNSTALKIHLLGHTGLRPYVCKYCGKAFASNTNCRSHKWKKHPELASKEDETESSRVPVPTLEELRAITREMAKAKQD.

The tract at residues 1 to 103 (MGVPTSDWIY…DALRLEYGLP (103 aa)) is required for homodimerization. One can recognise a ZAD domain in the interval 10-82 (YWCRLCARDD…SKVQAIFELL (73 aa)). Cysteine 12, cysteine 15, cysteine 55, and cysteine 58 together coordinate Zn(2+). Positions 156–265 (NSDPKVLASP…LSMSPHGSQS (110 aa)) are disordered. Position 168 is a phosphoserine (serine 168). A compositionally biased stretch (acidic residues) spans 195-208 (ESDDEEAILDEDEA). Over residues 214–225 (LKRKRGRPKGSG) the composition is skewed to basic residues. Residues 237–254 (TSREPDDNAKSKQDDKTS) are compositionally biased toward basic and acidic residues. Over residues 255–265 (ELSMSPHGSQS) the composition is skewed to polar residues. C2H2-type zinc fingers lie at residues 271–294 (YPCK…HDMH), 300–322 (YVCD…QLVH), 328–350 (CICP…SQTH), 355–377 (FECN…KYVH), 383–405 (FKCE…LLGH), and 411–434 (YVCK…WKKH).

Homodimer. Interacts with Myd88 and Toll.

The protein resides in the cell membrane. In terms of biological role, acts as an adapter to assemble/stabilize a Toll/wek/Myd88/tube complex; required for efficient recruitment of Myd88 to Toll. Dispensable for innate immune response; plays a minimal role, if any, in the immune defense against Gram-positive bacteria and fungi. Involved in dorsoventral axis determination. This is Zinc finger protein weckle from Drosophila melanogaster (Fruit fly).